Reading from the N-terminus, the 385-residue chain is Probable peptidoglycan glycosyltransferase FtsW (385 aa).

The next 9 helical transmembrane spans lie at leucine 18–leucine 38, isoleucine 57–leucine 77, leucine 81–leucine 101, tryptophan 111–leucine 131, leucine 157–leucine 177, phenylalanine 195–tyrosine 215, leucine 280–phenylalanine 300, leucine 311–isoleucine 331, and leucine 347–isoleucine 367.

The protein belongs to the SEDS family. FtsW subfamily.

It localises to the cell inner membrane. It catalyses the reaction [GlcNAc-(1-&gt;4)-Mur2Ac(oyl-L-Ala-gamma-D-Glu-L-Lys-D-Ala-D-Ala)](n)-di-trans,octa-cis-undecaprenyl diphosphate + beta-D-GlcNAc-(1-&gt;4)-Mur2Ac(oyl-L-Ala-gamma-D-Glu-L-Lys-D-Ala-D-Ala)-di-trans,octa-cis-undecaprenyl diphosphate = [GlcNAc-(1-&gt;4)-Mur2Ac(oyl-L-Ala-gamma-D-Glu-L-Lys-D-Ala-D-Ala)](n+1)-di-trans,octa-cis-undecaprenyl diphosphate + di-trans,octa-cis-undecaprenyl diphosphate + H(+). It participates in cell wall biogenesis; peptidoglycan biosynthesis. Functionally, peptidoglycan polymerase that is essential for cell division. In Alcanivorax borkumensis (strain ATCC 700651 / DSM 11573 / NCIMB 13689 / SK2), this protein is Probable peptidoglycan glycosyltransferase FtsW.